We begin with the raw amino-acid sequence, 1673 residues long: Protein TIC 214 (1673 aa).

6 consecutive transmembrane segments (helical) span residues 32–52, 70–90, 93–113, 130–150, 170–190, and 218–238; these read AGLY…ILLI, LILG…YIAF, PYTL…GNNL, LEIL…TCIF, MVFL…VLMC, and FFLV…IQSL. Composition is skewed to basic and acidic residues over residues 264–276 and 283–298; these read LKKS…GKST and SHEK…SKLE. Disordered regions lie at residues 264–302, 547–611, 1120–1146, and 1370–1433; these read LKKS…NEDE, VVFD…YSIR, NKQS…TDNL, and QQNQ…SEDD. Positions 562 to 586 are enriched in polar residues; sequence DNGNIQNNSSDKTINPQNNLTNLKP. A compositionally biased stretch (basic and acidic residues) spans 597-611; the sequence is TTEKEPKDDKSYSIR. Residues 1120–1135 show a composition bias toward polar residues; it reads NKQSLQKRNSSGNSNL. Residues 1370–1379 show a composition bias toward low complexity; it reads QQNQTTTKMN. Composition is skewed to basic and acidic residues over residues 1380–1399 and 1406–1423; these read TETK…KKTE and TKNK…KETE.

It belongs to the TIC214 family. As to quaternary structure, part of the Tic complex.

Its subcellular location is the plastid. It localises to the chloroplast inner membrane. Functionally, involved in protein precursor import into chloroplasts. May be part of an intermediate translocation complex acting as a protein-conducting channel at the inner envelope. This Cuscuta gronovii (Common dodder) protein is Protein TIC 214.